The sequence spans 332 residues: Phosphate acyltransferase (332 aa).

It belongs to the PlsX family. In terms of assembly, homodimer. Probably interacts with PlsY.

Its subcellular location is the cytoplasm. It carries out the reaction a fatty acyl-[ACP] + phosphate = an acyl phosphate + holo-[ACP]. It functions in the pathway lipid metabolism; phospholipid metabolism. Functionally, catalyzes the reversible formation of acyl-phosphate (acyl-PO(4)) from acyl-[acyl-carrier-protein] (acyl-ACP). This enzyme utilizes acyl-ACP as fatty acyl donor, but not acyl-CoA. This chain is Phosphate acyltransferase, found in Sulfurimonas denitrificans (strain ATCC 33889 / DSM 1251) (Thiomicrospira denitrificans (strain ATCC 33889 / DSM 1251)).